Consider the following 344-residue polypeptide: Phenylalanine--tRNA ligase alpha subunit (344 aa).

E256 is a Mg(2+) binding site.

It belongs to the class-II aminoacyl-tRNA synthetase family. Phe-tRNA synthetase alpha subunit type 1 subfamily. In terms of assembly, tetramer of two alpha and two beta subunits. Mg(2+) is required as a cofactor.

The protein localises to the cytoplasm. It carries out the reaction tRNA(Phe) + L-phenylalanine + ATP = L-phenylalanyl-tRNA(Phe) + AMP + diphosphate + H(+). The chain is Phenylalanine--tRNA ligase alpha subunit from Bacillus anthracis (strain CDC 684 / NRRL 3495).